We begin with the raw amino-acid sequence, 329 residues long: Tyrosine recombinase XerC 1 (329 aa).

The region spanning 14–101 (APPHPQIGAY…AWRGWYQWLA (88 aa)) is the Core-binding (CB) domain. The 198-residue stretch at 123-320 (RLPKALSVEQ…DFQHLAKIYD (198 aa)) folds into the Tyr recombinase domain. Active-site residues include Arg163, Lys198, His272, Arg275, and His298. The O-(3'-phospho-DNA)-tyrosine intermediate role is filled by Tyr307.

This sequence belongs to the 'phage' integrase family. XerC subfamily. As to quaternary structure, forms a cyclic heterotetrameric complex composed of two molecules of XerC and two molecules of XerD.

It localises to the cytoplasm. Site-specific tyrosine recombinase, which acts by catalyzing the cutting and rejoining of the recombining DNA molecules. The XerC-XerD complex is essential to convert dimers of the bacterial chromosome into monomers to permit their segregation at cell division. It also contributes to the segregational stability of plasmids. In Ralstonia nicotianae (strain ATCC BAA-1114 / GMI1000) (Ralstonia solanacearum), this protein is Tyrosine recombinase XerC 1 (xerC1).